A 775-amino-acid chain; its full sequence is E3 ubiquitin-protein ligase UHRF1 (775 aa).

One can recognise a Ubiquitin-like domain in the interval Met1–Pro77. The tract at residues Pro81–Val128 is disordered. 2 tudor-like regions span residues Ser131–Arg207 and Asp214–Pro283. A linker region spans residues Pro293 to Glu301. Residues Gly299–Asp366 form a PHD-type zinc finger. Histone H3R2me0 binding regions lie at residues Cys333–Asp337 and Pro353–Asp355. The 164-residue stretch at Gly419–Arg582 folds into the YDG domain. The tract at residues His445–Val446 is required to promote base flipping. DNA contacts are provided by residues Ala463–Gly464 and Asp469. Required for formation of a 5-methylcytosine-binding pocket stretches follow at residues Tyr466–Asp469 and Tyr478–Ser481. The span at Ala616–Asp628 shows a compositional bias: basic and acidic residues. Positions Ala616 to Pro655 are disordered. An RING-type zinc finger spans residues Cys706 to Arg745.

The protein localises to the nucleus. The catalysed reaction is S-ubiquitinyl-[E2 ubiquitin-conjugating enzyme]-L-cysteine + [acceptor protein]-L-lysine = [E2 ubiquitin-conjugating enzyme]-L-cysteine + N(6)-ubiquitinyl-[acceptor protein]-L-lysine.. It participates in protein modification; protein ubiquitination. Its function is as follows. Multidomain protein that acts as a key epigenetic regulator by bridging DNA methylation and chromatin modification. Specifically recognizes and binds hemimethylated DNA at replication forks via its YDG domain and recruits dnmt1 methyltransferase to ensure faithful propagation of the DNA methylation patterns through DNA replication. In addition to its role in maintenance of DNA methylation, also plays a key role in chromatin modification: through its tudor-like regions and PHD-type zinc fingers, specifically recognizes and binds histone H3 trimethylated at 'Lys-9' (H3K9me3) and unmethylated at 'Arg-2' (H3R2me0), respectively, and recruits chromatin proteins. Enriched in pericentric heterochromatin where it recruits different chromatin modifiers required for this chromatin replication. Also localizes to euchromatic regions where it negatively regulates transcription possibly by impacting DNA methylation and histone modifications. Has E3 ubiquitin-protein ligase activity by mediating the ubiquitination of target proteins. However, it is still unclear how E3 ubiquitin-protein ligase activity is related to its role in chromatin in vivo. This Xenopus tropicalis (Western clawed frog) protein is E3 ubiquitin-protein ligase UHRF1 (uhrf1).